The primary structure comprises 285 residues: Dermonecrotic toxin LlSicTox-alphaIII2 (285 aa).

H12 is an active-site residue. Mg(2+) is bound by residues E32 and D34. H47 acts as the Nucleophile in catalysis. A disulfide bridge links C51 with C57. Mg(2+) is bound at residue D91.

The protein belongs to the arthropod phospholipase D family. Class I subfamily. Requires Mg(2+) as cofactor. In terms of tissue distribution, expressed by the venom gland.

It localises to the secreted. The enzyme catalyses an N-(acyl)-sphingosylphosphocholine = an N-(acyl)-sphingosyl-1,3-cyclic phosphate + choline. It catalyses the reaction an N-(acyl)-sphingosylphosphoethanolamine = an N-(acyl)-sphingosyl-1,3-cyclic phosphate + ethanolamine. It carries out the reaction a 1-acyl-sn-glycero-3-phosphocholine = a 1-acyl-sn-glycero-2,3-cyclic phosphate + choline. The catalysed reaction is a 1-acyl-sn-glycero-3-phosphoethanolamine = a 1-acyl-sn-glycero-2,3-cyclic phosphate + ethanolamine. Its function is as follows. Dermonecrotic toxins cleave the phosphodiester linkage between the phosphate and headgroup of certain phospholipids (sphingolipid and lysolipid substrates), forming an alcohol (often choline) and a cyclic phosphate. This toxin acts on sphingomyelin (SM) (228.2 U/mg). It may also act on ceramide phosphoethanolamine (CPE), lysophosphatidylcholine (LPC) and lysophosphatidylethanolamine (LPE), but not on lysophosphatidylserine (LPS), and lysophosphatidylglycerol (LPG). It acts by transphosphatidylation, releasing exclusively cyclic phosphate products as second products. Induces dermonecrosis, hemolysis, increased vascular permeability, edema, inflammatory response, and platelet aggregation. Is lethal to mice. In Loxosceles laeta (South American recluse spider), this protein is Dermonecrotic toxin LlSicTox-alphaIII2.